The chain runs to 964 residues: Chromatin assembly factor 1 subunit A (964 aa).

Residues Met-1 to Lys-49 are binds to PCNA. The interval Met-1 to Ala-316 is binds to CBX1 chromo shadow domain. Phosphoserine is present on residues Ser-126, Ser-141, and Ser-144. The tract at residues Ala-146–Gly-232 is disordered. A compositionally biased stretch (basic and acidic residues) spans Lys-156–Leu-172. Lys-185 is covalently cross-linked (Glycyl lysine isopeptide (Lys-Gly) (interchain with G-Cter in SUMO1); alternate). Lys-185 is covalently cross-linked (Glycyl lysine isopeptide (Lys-Gly) (interchain with G-Cter in SUMO2); alternate). Positions Phe-236–Leu-249 match the PxVxL motif motif. 2 disordered regions span residues Pro-253 to Glu-437 and Asp-601 to Gly-641. Residues Leu-284–Pro-298 are compositionally biased toward low complexity. Residue Ser-312 is modified to Phosphoserine. Positions Arg-329–Lys-453 form a coiled coil. Basic and acidic residues predominate over residues Ser-331 to Glu-437. Acidic residues-rich tracts occupy residues Asp-601–Gly-612 and Gly-620–Gly-635. Residues Ser-644 to Phe-680 are necessary for homodimerization and competence for chromatin assembly. The tract at residues Arg-662–Ser-964 is binds to p60. Thr-723 bears the Phosphothreonine mark. Residues Arg-769 to Ala-799 are disordered. Positions Asp-770–Ser-780 are enriched in low complexity. 5 positions are modified to phosphoserine: Ser-773, Ser-783, Ser-811, Ser-876, and Ser-881. The disordered stretch occupies residues Glu-859–Lys-878. 2 disordered regions span residues Asp-897–Gly-920 and Ile-933–Ser-964. Residues Asp-904–Gly-920 are compositionally biased toward acidic residues. Residues Met-949 to Ser-964 show a composition bias toward polar residues. Phosphoserine is present on Ser-959.

This sequence belongs to the CHAF1A family. Homodimer. Part of the CAF-1 complex that contains RBBP4, CHAF1B and CHAF1A. CHAF1A binds directly to CHAF1B. Only minor amounts of RBBP4 are complexed with CHAF1A and CHAF1B in G1 phase. Interacts with PCNA; the interaction is direct. Interacts (via the PxVxL motif) with CBX5; the interaction is direct. Interacts with MBD1. Interacts with histones H3.1, H3.2 and H3.1t.

The protein localises to the nucleus. Functionally, acts as a component of the histone chaperone complex chromatin assembly factor 1 (CAF-1), which assembles histone octamers onto DNA during replication and repair. CAF-1 performs the first step of the nucleosome assembly process, bringing newly synthesized histones H3 and H4 to replicating DNA; histones H2A/H2B can bind to this chromatin precursor subsequent to DNA replication to complete the histone octamer. It may play a role in heterochromatin maintenance in proliferating cells by bringing newly synthesized cbx proteins to heterochromatic DNA replication foci. This Bos taurus (Bovine) protein is Chromatin assembly factor 1 subunit A (CHAF1A).